The sequence spans 488 residues: Probable aldehyde dehydrogenase (488 aa).

240–245 (GSSVTG) serves as a coordination point for NAD(+). Active-site residues include E262 and C296.

It belongs to the aldehyde dehydrogenase family.

The enzyme catalyses an aldehyde + NAD(+) + H2O = a carboxylate + NADH + 2 H(+). In terms of biological role, involved in an alpha-terpineol oxidation system. The polypeptide is Probable aldehyde dehydrogenase (terPE) (Pseudomonas sp).